An 820-amino-acid polypeptide reads, in one-letter code: Crinkler effector protein 108 (820 aa).

Residues 1-17 (MVKLYCAVVGVAGSAFS) form the signal peptide. The LQLFLAK domain stretch occupies residues 18-55 (VRVDESDTVDDLKDAIKAKKPNDFKDIDADKLELYVAK). Positions 58–111 (GVWLTEADVKSGVADITGLVRLEVVRAKLFSVGLSDEVVSEVDAQEEAAGRGPV) are DWL domain. The short motif at 112 to 117 (NVLVVV) is the HVLVXXP motif element. Residues 118–124 (PMKKRRV) carry the Host nuclear localization signal motif. Positions 125–820 (DAGVDEERRF…MHYDDDEADL (696 aa)) are C-terminal DC effector domain. Residues Asn268, Asn371, and Asn703 are each glycosylated (N-linked (GlcNAc...) asparagine). The hhH DNA-binding domain stretch occupies residues 754–791 (NINTASFHELRRLEGVGDATAAKIIAERTIRRFSNLED).

The protein belongs to the Crinkler effector family.

It is found in the secreted. Its subcellular location is the host nucleus. Secreted effector that suppresses plant basal defense and promotes plant susceptibility via targeting promoters of host HSP gene and thus inhibiting their expression. CRN108 binds directly to heat shock elements (HSEs) 5'-GAAnnTTC-3' and interferes with the association of the HSE with the plant heat shock transcription factors, which initializes HSP gene expression in response to stress. The polypeptide is Crinkler effector protein 108 (Phytophthora sojae (Soybean stem and root rot agent)).